A 113-amino-acid polypeptide reads, in one-letter code: U11-theraphotoxin-Hhn1a (113 aa).

The signal sequence occupies residues 1-21; it reads MNTVRVTFLLVFVLAVSLGQA. A propeptide spanning residues 22–74 is cleaved from the precursor; the sequence is DKDENRMVMQEKTEQGKSYLDFAENLLLQKLEELEAKLLEEDSEESRNSRQKR. 3 disulfide bridges follow: Cys75–Cys90, Cys82–Cys95, and Cys89–Cys110.

This sequence belongs to the neurotoxin 14 (magi-1) family. 01 (HNTX-16) subfamily. In terms of tissue distribution, expressed by the venom gland.

It localises to the secreted. Probable ion channel inhibitor. The polypeptide is U11-theraphotoxin-Hhn1a (Cyriopagopus hainanus (Chinese bird spider)).